A 249-amino-acid chain; its full sequence is Probable endopeptidase YafL (249 aa).

Positions 1–17 (MSLPSIPSFVLSGLLLI) are cleaved as a signal peptide. Cysteine 18 carries N-palmitoyl cysteine lipidation. Cysteine 18 carries the S-diacylglycerol cysteine lipid modification. The NlpC/P60 domain occupies 116-243 (HNITEVAIHR…DHFLGARRIL (128 aa)). Catalysis depends on cysteine 147, which acts as the Nucleophile. Histidine 202 (proton acceptor) is an active-site residue. Glutamate 214 is a catalytic residue.

This sequence belongs to the peptidase C40 family.

Its subcellular location is the cell membrane. The sequence is that of Probable endopeptidase YafL (yafL) from Escherichia coli (strain K12).